The primary structure comprises 128 residues: Protein C10 (128 aa).

Belongs to the UPF0456 family.

Its subcellular location is the cytoplasm. This Xenopus laevis (African clawed frog) protein is Protein C10.